A 364-amino-acid polypeptide reads, in one-letter code: MQERHTEQDYRALLIADTPIIDVRAPVEFEQGAMPAAINLPLMNNDERAAVGTCYKQQGSDAALALGHKLVAGEIRQQRMDAWRAACLQNPQGILCCARGGQRSHIVQRWLHEAGIDYPLVEGGYKALRQTAIQATIELAQKPIVLIGGCTGCGKTLLVQQQPNGVDLEGLARHRGSAFGRTLQPQLSQASFENLLAAEMLKTDARQELRLWVLEDESRMIGSNHLPECLRERMTQAAIAVVEDPFEIRLERLNEEYFLRMHHDFIHAYGDEQGWQEYCEYLHHGLSAIKRRLGLQRYNELATRLDAALTTQLATGSTDGHLAWLVPLLEEYYDPMYRYQLEKKAEKVVFRGEWAEVAEWVKAQ.

Positions 14 to 137 (LIADTPIIDV…LRQTAIQATI (124 aa)) constitute a Rhodanese domain. Catalysis depends on Cys97, which acts as the S-selanylcysteine intermediate.

Belongs to the SelU family. In terms of assembly, monomer.

The enzyme catalyses 5-methylaminomethyl-2-thiouridine(34) in tRNA + selenophosphate + (2E)-geranyl diphosphate + H2O + H(+) = 5-methylaminomethyl-2-selenouridine(34) in tRNA + (2E)-thiogeraniol + phosphate + diphosphate. It catalyses the reaction 5-methylaminomethyl-2-thiouridine(34) in tRNA + (2E)-geranyl diphosphate = 5-methylaminomethyl-S-(2E)-geranyl-thiouridine(34) in tRNA + diphosphate. It carries out the reaction 5-methylaminomethyl-S-(2E)-geranyl-thiouridine(34) in tRNA + selenophosphate + H(+) = 5-methylaminomethyl-2-(Se-phospho)selenouridine(34) in tRNA + (2E)-thiogeraniol. The catalysed reaction is 5-methylaminomethyl-2-(Se-phospho)selenouridine(34) in tRNA + H2O = 5-methylaminomethyl-2-selenouridine(34) in tRNA + phosphate. Involved in the post-transcriptional modification of the uridine at the wobble position (U34) of tRNA(Lys), tRNA(Glu) and tRNA(Gln). Catalyzes the conversion of 2-thiouridine (S2U-RNA) to 2-selenouridine (Se2U-RNA). Acts in a two-step process involving geranylation of 2-thiouridine (S2U) to S-geranyl-2-thiouridine (geS2U) and subsequent selenation of the latter derivative to 2-selenouridine (Se2U) in the tRNA chain. In Escherichia fergusonii (strain ATCC 35469 / DSM 13698 / CCUG 18766 / IAM 14443 / JCM 21226 / LMG 7866 / NBRC 102419 / NCTC 12128 / CDC 0568-73), this protein is tRNA 2-selenouridine synthase.